We begin with the raw amino-acid sequence, 245 residues long: tRNA1(Val) (adenine(37)-N6)-methyltransferase (245 aa).

It belongs to the methyltransferase superfamily. tRNA (adenine-N(6)-)-methyltransferase family.

It is found in the cytoplasm. The catalysed reaction is adenosine(37) in tRNA1(Val) + S-adenosyl-L-methionine = N(6)-methyladenosine(37) in tRNA1(Val) + S-adenosyl-L-homocysteine + H(+). Specifically methylates the adenine in position 37 of tRNA(1)(Val) (anticodon cmo5UAC). In Escherichia coli O157:H7, this protein is tRNA1(Val) (adenine(37)-N6)-methyltransferase.